Here is a 603-residue protein sequence, read N- to C-terminus: Elongation factor 4 (603 aa).

Positions 7–189 constitute a tr-type G domain; sequence KKIRNFCIIA…SVVKNVPPPE (183 aa). GTP is bound by residues 19 to 24 and 136 to 139; these read DHGKST and NKID.

This sequence belongs to the TRAFAC class translation factor GTPase superfamily. Classic translation factor GTPase family. LepA subfamily.

Its subcellular location is the cell membrane. It catalyses the reaction GTP + H2O = GDP + phosphate + H(+). Required for accurate and efficient protein synthesis under certain stress conditions. May act as a fidelity factor of the translation reaction, by catalyzing a one-codon backward translocation of tRNAs on improperly translocated ribosomes. Back-translocation proceeds from a post-translocation (POST) complex to a pre-translocation (PRE) complex, thus giving elongation factor G a second chance to translocate the tRNAs correctly. Binds to ribosomes in a GTP-dependent manner. This is Elongation factor 4 from Acetivibrio thermocellus (strain ATCC 27405 / DSM 1237 / JCM 9322 / NBRC 103400 / NCIMB 10682 / NRRL B-4536 / VPI 7372) (Clostridium thermocellum).